A 278-amino-acid polypeptide reads, in one-letter code: Pantothenate synthetase (278 aa).

Residue Met-26 to His-33 participates in ATP binding. His-33 serves as the catalytic Proton donor. Gln-57 is a (R)-pantoate binding site. Gln-57 contributes to the beta-alanine binding site. ATP is bound at residue Gly-144–Asp-147. A (R)-pantoate-binding site is contributed by Gln-150. ATP contacts are provided by residues Gly-173 and Leu-181–Arg-184.

It belongs to the pantothenate synthetase family. Homodimer.

It is found in the cytoplasm. The enzyme catalyses (R)-pantoate + beta-alanine + ATP = (R)-pantothenate + AMP + diphosphate + H(+). It participates in cofactor biosynthesis; (R)-pantothenate biosynthesis; (R)-pantothenate from (R)-pantoate and beta-alanine: step 1/1. Its function is as follows. Catalyzes the condensation of pantoate with beta-alanine in an ATP-dependent reaction via a pantoyl-adenylate intermediate. This Neisseria meningitidis serogroup C / serotype 2a (strain ATCC 700532 / DSM 15464 / FAM18) protein is Pantothenate synthetase.